A 189-amino-acid chain; its full sequence is MYLVVGLGNIGKEYKKTRHNIGFDVVDIIAEKYNIEINRQKFKGSYGEGRIGNEKIILLKPSTYMNLSGESVIEAANFYKIDKENIIVIYDDMSIDIGKLRVRGKGSAGGHNGIKNIIQHLNSDIFPRVRVGIGQPDENVVNYVLGKFSKDQREIIEKVLAMSAKACISIVEDGVTEAMNKYNGVKIEV.

Residue Tyr-14 participates in tRNA binding. The active-site Proton acceptor is His-19. TRNA is bound by residues Tyr-64, Asn-66, and Asn-112.

Belongs to the PTH family. In terms of assembly, monomer.

The protein localises to the cytoplasm. The enzyme catalyses an N-acyl-L-alpha-aminoacyl-tRNA + H2O = an N-acyl-L-amino acid + a tRNA + H(+). Hydrolyzes ribosome-free peptidyl-tRNAs (with 1 or more amino acids incorporated), which drop off the ribosome during protein synthesis, or as a result of ribosome stalling. Functionally, catalyzes the release of premature peptidyl moieties from peptidyl-tRNA molecules trapped in stalled 50S ribosomal subunits, and thus maintains levels of free tRNAs and 50S ribosomes. The chain is Peptidyl-tRNA hydrolase from Clostridium botulinum (strain Langeland / NCTC 10281 / Type F).